A 509-amino-acid polypeptide reads, in one-letter code: Probable cytochrome P450 4ac1 (509 aa).

Glutamate 317 and cysteine 454 together coordinate heme.

This sequence belongs to the cytochrome P450 family. It depends on heme as a cofactor.

The protein localises to the endoplasmic reticulum membrane. The protein resides in the microsome membrane. In terms of biological role, may be involved in the metabolism of insect hormones and in the breakdown of synthetic insecticides. The chain is Probable cytochrome P450 4ac1 (Cyp4ac1) from Drosophila melanogaster (Fruit fly).